A 346-amino-acid chain; its full sequence is Probable dual-specificity RNA methyltransferase RlmN (346 aa).

Glu-90 (proton acceptor) is an active-site residue. Residues 96–330 enclose the Radical SAM core domain; it reads TRDRLTVCVS…VSVRASRGLD (235 aa). A disulfide bridge connects residues Cys-103 and Cys-335. Cys-110, Cys-114, and Cys-117 together coordinate [4Fe-4S] cluster. Residues 157-158, Ser-187, 216-218, and Asn-292 each bind S-adenosyl-L-methionine; these read GE and SLH. Cys-335 serves as the catalytic S-methylcysteine intermediate.

The protein belongs to the radical SAM superfamily. RlmN family. Requires [4Fe-4S] cluster as cofactor.

It localises to the cytoplasm. The catalysed reaction is adenosine(2503) in 23S rRNA + 2 reduced [2Fe-2S]-[ferredoxin] + 2 S-adenosyl-L-methionine = 2-methyladenosine(2503) in 23S rRNA + 5'-deoxyadenosine + L-methionine + 2 oxidized [2Fe-2S]-[ferredoxin] + S-adenosyl-L-homocysteine. It carries out the reaction adenosine(37) in tRNA + 2 reduced [2Fe-2S]-[ferredoxin] + 2 S-adenosyl-L-methionine = 2-methyladenosine(37) in tRNA + 5'-deoxyadenosine + L-methionine + 2 oxidized [2Fe-2S]-[ferredoxin] + S-adenosyl-L-homocysteine. Specifically methylates position 2 of adenine 2503 in 23S rRNA and position 2 of adenine 37 in tRNAs. The sequence is that of Probable dual-specificity RNA methyltransferase RlmN from Synechococcus sp. (strain RCC307).